The sequence spans 416 residues: UDP-N-acetylglucosamine 1-carboxyvinyltransferase (416 aa).

22–23 contributes to the phosphoenolpyruvate binding site; that stretch reads KN. UDP-N-acetyl-alpha-D-glucosamine is bound at residue arginine 92. Cysteine 116 serves as the catalytic Proton donor. 2-(S-cysteinyl)pyruvic acid O-phosphothioketal is present on cysteine 116. UDP-N-acetyl-alpha-D-glucosamine is bound by residues 121–125, aspartate 304, and isoleucine 326; that span reads RPVDQ.

It belongs to the EPSP synthase family. MurA subfamily.

It localises to the cytoplasm. It carries out the reaction phosphoenolpyruvate + UDP-N-acetyl-alpha-D-glucosamine = UDP-N-acetyl-3-O-(1-carboxyvinyl)-alpha-D-glucosamine + phosphate. The protein operates within cell wall biogenesis; peptidoglycan biosynthesis. Its function is as follows. Cell wall formation. Adds enolpyruvyl to UDP-N-acetylglucosamine. The sequence is that of UDP-N-acetylglucosamine 1-carboxyvinyltransferase from Aromatoleum aromaticum (strain DSM 19018 / LMG 30748 / EbN1) (Azoarcus sp. (strain EbN1)).